We begin with the raw amino-acid sequence, 250 residues long: MMDLNADLGEGFGNWTLTDDDALLACVTSANVACGFHAGDASVMRRVCDAAAAGGVRIGAQVSYRDLAGFGRRSMDVPPAELTAEIAYQIGALRVFAEAAGATVSYVKPHGALYNRVVWDDDQAAAVVAGVRLAGGAPAVLGLPGSRLLAHAAEAGLPAVQEAFADRAYTPQGTLVPRGEPGAVVHDPDDVVRRSVGMAVERAVTGADGSRIPVAARSLCVHGDTPGAAALARRVRAALEEAGVEVRAFA.

This sequence belongs to the LamB/PxpA family. As to quaternary structure, forms a complex composed of PxpA, PxpB and PxpC.

It catalyses the reaction 5-oxo-L-proline + ATP + 2 H2O = L-glutamate + ADP + phosphate + H(+). Its function is as follows. Catalyzes the cleavage of 5-oxoproline to form L-glutamate coupled to the hydrolysis of ATP to ADP and inorganic phosphate. This Streptomyces griseus subsp. griseus (strain JCM 4626 / CBS 651.72 / NBRC 13350 / KCC S-0626 / ISP 5235) protein is 5-oxoprolinase subunit A.